The following is a 297-amino-acid chain: Large ribosomal subunit protein uL18 (297 aa).

Position 2 is an N-acetylglycine (Gly-2). Lys-5 and Lys-48 each carry N6-acetyllysine. At Ser-185 the chain carries Phosphoserine. Lys-220 is modified (N6-acetyllysine; alternate). Lys-220 participates in a covalent cross-link: Glycyl lysine isopeptide (Lys-Gly) (interchain with G-Cter in SUMO1); alternate. A Glycyl lysine isopeptide (Lys-Gly) (interchain with G-Cter in SUMO2); alternate cross-link involves residue Lys-220. At Thr-232 the chain carries Phosphothreonine. Positions 252–297 are disordered; that stretch reads VYEKKPKKEVKKKRWNRPKMSLAQKKDRVAQKKASFLRAQERAAES. The span at 258–268 shows a compositional bias: basic residues; it reads KKEVKKKRWNR. A Phosphoserine modification is found at Ser-272.

This sequence belongs to the universal ribosomal protein uL18 family. As to quaternary structure, component of the large ribosomal subunit (LSU). Part of the 5S RNP complex, which is a LSU subcomplex composed of the 5S RNA, RPL5 and RPL11. Component of a hexameric 5S RNP precursor complex, composed of 5S RNA, RRS1, RPF2/BXDC1, RPL5, RPL11 and HEATR3; this complex acts as a precursor for ribosome assembly. Interacts with NVL in an ATP-dependent manner. Interacts with RRP1B. Interacts with IPO5, IPO7 and KPNB1; these interactions may be involved in RPL5 nuclear import for the assembly of ribosomal subunits.

It is found in the cytoplasm. The protein resides in the nucleus. It localises to the nucleolus. Functionally, component of the ribosome, a large ribonucleoprotein complex responsible for the synthesis of proteins in the cell. The small ribosomal subunit (SSU) binds messenger RNAs (mRNAs) and translates the encoded message by selecting cognate aminoacyl-transfer RNA (tRNA) molecules. The large subunit (LSU) contains the ribosomal catalytic site termed the peptidyl transferase center (PTC), which catalyzes the formation of peptide bonds, thereby polymerizing the amino acids delivered by tRNAs into a polypeptide chain. The nascent polypeptides leave the ribosome through a tunnel in the LSU and interact with protein factors that function in enzymatic processing, targeting, and the membrane insertion of nascent chains at the exit of the ribosomal tunnel. As part of the 5S RNP/5S ribonucleoprotein particle it is an essential component of the LSU, required for its formation and the maturation of rRNAs. It also couples ribosome biogenesis to p53/TP53 activation. As part of the 5S RNP it accumulates in the nucleoplasm and inhibits MDM2, when ribosome biogenesis is perturbed, mediating the stabilization and the activation of TP53. In Bos taurus (Bovine), this protein is Large ribosomal subunit protein uL18 (RPL5).